The primary structure comprises 263 residues: Acetylglutamate kinase (263 aa).

Substrate-binding positions include 48-49 (GG), arginine 70, and asparagine 162.

This sequence belongs to the acetylglutamate kinase family. ArgB subfamily.

The protein localises to the cytoplasm. The enzyme catalyses N-acetyl-L-glutamate + ATP = N-acetyl-L-glutamyl 5-phosphate + ADP. It functions in the pathway amino-acid biosynthesis; L-arginine biosynthesis; N(2)-acetyl-L-ornithine from L-glutamate: step 2/4. Catalyzes the ATP-dependent phosphorylation of N-acetyl-L-glutamate. The chain is Acetylglutamate kinase from Vibrio campbellii (strain ATCC BAA-1116).